The following is an 895-amino-acid chain: Alanine--tRNA ligase (895 aa).

Zn(2+) is bound by residues histidine 586, histidine 590, cysteine 690, and histidine 694.

The protein belongs to the class-II aminoacyl-tRNA synthetase family. Zn(2+) is required as a cofactor.

The protein resides in the cytoplasm. It catalyses the reaction tRNA(Ala) + L-alanine + ATP = L-alanyl-tRNA(Ala) + AMP + diphosphate. Catalyzes the attachment of alanine to tRNA(Ala) in a two-step reaction: alanine is first activated by ATP to form Ala-AMP and then transferred to the acceptor end of tRNA(Ala). Also edits incorrectly charged Ser-tRNA(Ala) and Gly-tRNA(Ala) via its editing domain. The chain is Alanine--tRNA ligase from Korarchaeum cryptofilum (strain OPF8).